A 108-amino-acid chain; its full sequence is Urease subunit beta (108 aa).

This sequence belongs to the urease beta subunit family. As to quaternary structure, heterotrimer of UreA (gamma), UreB (beta) and UreC (alpha) subunits. Three heterotrimers associate to form the active enzyme.

It localises to the cytoplasm. The catalysed reaction is urea + 2 H2O + H(+) = hydrogencarbonate + 2 NH4(+). The protein operates within nitrogen metabolism; urea degradation; CO(2) and NH(3) from urea (urease route): step 1/1. This Nocardia farcinica (strain IFM 10152) protein is Urease subunit beta.